The sequence spans 351 residues: Selenide, water dikinase (351 aa).

Sec-15 is a catalytic residue. Position 15 (Sec-15) is a non-standard amino acid, selenocysteine. ATP contacts are provided by residues Lys-18 and Asp-47–Glu-49. A Mg(2+)-binding site is contributed by Asp-50. ATP contacts are provided by residues Asp-67, Asp-90, and Gly-138 to Ser-140. Mg(2+) is bound at residue Asp-90. Residue Asp-227 coordinates Mg(2+).

This sequence belongs to the selenophosphate synthase 1 family. Class I subfamily. As to quaternary structure, homodimer. Mg(2+) serves as cofactor.

It carries out the reaction hydrogenselenide + ATP + H2O = selenophosphate + AMP + phosphate + 2 H(+). Functionally, synthesizes selenophosphate from selenide and ATP. In Nitratidesulfovibrio vulgaris (strain ATCC 29579 / DSM 644 / CCUG 34227 / NCIMB 8303 / VKM B-1760 / Hildenborough) (Desulfovibrio vulgaris), this protein is Selenide, water dikinase.